A 466-amino-acid chain; its full sequence is Vimentin (466 aa).

2 stretches are compositionally biased toward low complexity: residues 1-13 and 20-31; these read MSTR…SYRR and TASRPSSSRSYV. The tract at residues 1–31 is disordered; the sequence is MSTRTVSSSSYRRMFGGPGTASRPSSSRSYV. S2 is subject to N-acetylserine. The segment at 2–95 is head; the sequence is STRTVSSSSY…FSLADAINTE (94 aa). At S7 the chain carries Phosphoserine; alternate. O-linked (GlcNAc) serine; alternate glycosylation occurs at S7. A phosphoserine mark is found at S8, S9, and S10. T20 bears the Phosphothreonine mark. Residues S25 and S26 each carry the phosphoserine modification. T33 carries O-linked (GlcNAc) threonine glycosylation. S34 carries an O-linked (GlcNAc) serine; alternate glycan. S34 carries the post-translational modification Phosphoserine; by PKC; alternate. Phosphoserine; by CaMK2, PKA, PKC and ROCK2 is present on S39. Phosphoserine is present on residues S42, S47, S49, and S51. Y53 is modified (phosphotyrosine). S55 bears the Phosphoserine mark. S56 carries the post-translational modification Phosphoserine; by CDK5 and CDK1. Position 61 is a phosphotyrosine (Y61). S66 bears the Phosphoserine mark. Residue S72 is modified to Phosphoserine; by AURKB and ROCK2. Residues S73 and S87 each carry the phosphoserine modification. Positions 96 to 131 are coil 1A; sequence FKNTRTNEKVELQELNDRFANYIDKVRFLEQQNKIL. Residues 96–131 adopt a coiled-coil conformation; that stretch reads FKNTRTNEKVELQELNDRFANYIDKVRFLEQQNKIL. An IF rod domain is found at 103 to 411; it reads EKVELQELND…KLLEGEESRI (309 aa). Residue K104 forms a Glycyl lysine isopeptide (Lys-Gly) (interchain with G-Cter in SUMO2) linkage. Y117 is modified (phosphotyrosine). N6-acetyllysine; alternate is present on residues K120, K129, and K139. Residues K120 and K129 each carry the N6-succinyllysine; alternate modification. Residues K120, K129, and K139 each participate in a glycyl lysine isopeptide (Lys-Gly) (interchain with G-Cter in SUMO2); alternate cross-link. Residues 132 to 153 are linker 1; sequence LAELEQLKGQGKSRLGDLYEEE. S144 carries the phosphoserine modification. Residues 154–245 adopt a coiled-coil conformation; the sequence is MRELRRQVDQ…KLHDEEIQEL (92 aa). The coil 1B stretch occupies residues 154-245; the sequence is MRELRRQVDQ…KLHDEEIQEL (92 aa). The residue at position 168 (K168) is an N6-acetyllysine. K188 bears the N6-acetyllysine; alternate mark. N6-succinyllysine; alternate is present on K188. The residue at position 214 (S214) is a Phosphoserine. K223 is modified (N6-acetyllysine; alternate). A Glycyl lysine isopeptide (Lys-Gly) (interchain with G-Cter in SUMO2); alternate cross-link involves residue K223. The residue at position 226 (S226) is a Phosphoserine. K235 carries the post-translational modification N6-acetyllysine. Residues 246 to 268 form a linker 12 region; sequence QAQIQEQHVQIDMDVSKPDLTAA. A Glycyl lysine isopeptide (Lys-Gly) (interchain with G-Cter in SUMO2) cross-link involves residue K262. Residues 269 to 407 are coil 2; sequence LRDVRQQYES…ATYRKLLEGE (139 aa). Residue K294 is modified to N6-acetyllysine; alternate. N6-succinyllysine; alternate is present on K294. Residue K294 forms a Glycyl lysine isopeptide (Lys-Gly) (interchain with G-Cter in SUMO2); alternate linkage. S299 is subject to Phosphoserine. The stretch at 303-407 forms a coiled coil; sequence NRNNDALRQA…ATYRKLLEGE (105 aa). K313 participates in a covalent cross-link: Glycyl lysine isopeptide (Lys-Gly) (interchain with G-Cter in SUMO2). At S325 the chain carries Phosphoserine. The short motif at 326–329 is the [IL]-x-C-x-x-[DE] motif element; that stretch reads LTCE. K373 is modified (N6-acetyllysine; alternate). K373 is covalently cross-linked (Glycyl lysine isopeptide (Lys-Gly) (interchain with G-Cter in SUMO2); alternate). The tail stretch occupies residues 408 to 466; that stretch reads ESRISLPLPNFSSLNLRETNLESLPLVDTHSKRTLLIKTVETRDGQVINETSQHHDDLE. A phosphoserine mark is found at S409, S412, S419, and S420. Phosphothreonine is present on T426. At S430 the chain carries Phosphoserine. The residue at position 436 (T436) is a Phosphothreonine. S438 is subject to Phosphoserine. A Glycyl lysine isopeptide (Lys-Gly) (interchain with G-Cter in SUMO2) cross-link involves residue K439. K445 carries the post-translational modification N6-acetyllysine; alternate. An N6-succinyllysine; alternate modification is found at K445. K445 is covalently cross-linked (Glycyl lysine isopeptide (Lys-Gly) (interchain with G-Cter in SUMO2); alternate). K445 participates in a covalent cross-link: Glycyl lysine isopeptide (Lys-Gly) (interchain with G-Cter in SUMO1); alternate. Phosphothreonine occurs at positions 446 and 458. S459 carries the post-translational modification Phosphoserine.

Belongs to the intermediate filament family. As to quaternary structure, homomer assembled from elementary dimers. Identified in complexes that contain VIM, EZR, AHNAK, BFSP1, BFSP2, ANK2, PLEC, PRX and spectrin. Interacts with BCAS3. Interacts with LGSN. Interacts with SYNM. Interacts (via rod region) with PLEC (via CH 1 domain). Interacts with STK33. Interacts with LARP6. Interacts with RAB8B. Interacts with TOR1A; the interaction associates TOR1A with the cytoskeleton. Interacts with TOR1AIP1. Interacts with TOR1AIP1. Interacts with DIAPH1. Interacts with EPPK1; interaction is dependent of higher-order structure of intermediate filament. Interacts with the non-receptor tyrosine kinase SRMS; the interaction leads to phosphorylation of VIM. Interacts with NOD2. Interacts (via head region) with CORO1C. Interacts with HDGF. Interacts with PRKCE (via phorbol-ester/DAG-type 2 domain). Interacts with BFSP2. Interacts with PPL. Interacts with PKP1 and PKP2. Interacts with SCRIB (via PDZ domains); the interaction protects SCRIB from proteasomal degradation and facilitates SCRIB localization to intermediate filaments, the interaction is reduced by cell contact inhibition. One of the most prominent phosphoproteins in various cells of mesenchymal origin. Phosphorylation is enhanced during cell division, at which time vimentin filaments are significantly reorganized. Phosphorylation by PKN1 inhibits the formation of filaments. Filament disassembly during mitosis is promoted by phosphorylation at Ser-55 as well as by nestin. Phosphorylated at Ser-56 by CDK5 during neutrophil secretion in the cytoplasm. Phosphorylated by STK33. Phosphorylated on tyrosine residues by SRMS. In terms of processing, S-nitrosylation is induced by interferon-gamma and oxidatively-modified low-densitity lipoprotein (LDL(ox)) possibly implicating the iNOS-S100A8/9 transnitrosylase complex.

The protein resides in the cytoplasm. Its subcellular location is the cytoskeleton. It localises to the nucleus matrix. It is found in the cell membrane. Functionally, vimentins are class-III intermediate filaments found in various non-epithelial cells, especially mesenchymal cells. Vimentin is attached to the nucleus, endoplasmic reticulum, and mitochondria, either laterally or terminally. Plays a role in cell directional movement, orientation, cell sheet organization and Golgi complex polarization at the cell migration front. Protects SCRIB from proteasomal degradation and facilitates its localization to intermediate filaments in a cell contact-mediated manner. Its function is as follows. Involved with LARP6 in the stabilization of type I collagen mRNAs for CO1A1 and CO1A2. This chain is Vimentin (VIM), found in Sus scrofa (Pig).